The primary structure comprises 394 residues: Endothelial cell-selective adhesion molecule (394 aa).

The N-terminal stretch at Met1–Ala29 is a signal peptide. At Gln30 to Ala251 the chain is on the extracellular side. An Ig-like V-type domain is found at Pro37–Lys146. N-linked (GlcNAc...) asparagine glycosylation is found at Asn111, Asn172, Asn216, and Asn239. The Ig-like C2-type domain occupies Pro156–Asp243. Cys177 and Cys227 are joined by a disulfide. The helical transmembrane segment at Val252–Leu272 threads the bilayer. Over Leu273–Val394 the chain is Cytoplasmic. A disordered region spans residues Trp300–Ser372. 2 stretches are compositionally biased toward polar residues: residues Gly303–Ser318 and Phe335–Ser347. Residue Ser304 is modified to Phosphoserine. A phosphothreonine mark is found at Thr336 and Thr338. A phosphoserine mark is found at Ser340, Ser343, and Ser348.

In terms of assembly, interacts with MAGI1.

The protein localises to the cell junction. It is found in the adherens junction. The protein resides in the tight junction. Its subcellular location is the cell membrane. Can mediate aggregation most likely through a homophilic molecular interaction. The sequence is that of Endothelial cell-selective adhesion molecule (Esam) from Rattus norvegicus (Rat).